Consider the following 252-residue polypeptide: Isoprenyl transferase (252 aa).

The active site involves D32. Position 32 (D32) interacts with Mg(2+). Residues 33–36, W37, R45, H49, and 77–79 each bind substrate; these read GNGR and STE. Catalysis depends on N80, which acts as the Proton acceptor. Substrate is bound by residues W81, R83, R200, and 206-208; that span reads RLS. E219 is a binding site for Mg(2+).

Belongs to the UPP synthase family. As to quaternary structure, homodimer. Requires Mg(2+) as cofactor.

Catalyzes the condensation of isopentenyl diphosphate (IPP) with allylic pyrophosphates generating different type of terpenoids. This is Isoprenyl transferase from Listeria innocua serovar 6a (strain ATCC BAA-680 / CLIP 11262).